The following is a 220-amino-acid chain: 7-cyano-7-deazaguanine synthase (220 aa).

10-20 (FSGGQDSTTCL) lines the ATP pocket. Zn(2+) is bound by residues Cys-186, Cys-195, Cys-198, and Cys-201.

Belongs to the QueC family. As to quaternary structure, homodimer. Zn(2+) is required as a cofactor.

It catalyses the reaction 7-carboxy-7-deazaguanine + NH4(+) + ATP = 7-cyano-7-deazaguanine + ADP + phosphate + H2O + H(+). The protein operates within purine metabolism; 7-cyano-7-deazaguanine biosynthesis. Its function is as follows. Catalyzes the ATP-dependent conversion of 7-carboxy-7-deazaguanine (CDG) to 7-cyano-7-deazaguanine (preQ(0)). In Bacillus thuringiensis (strain Al Hakam), this protein is 7-cyano-7-deazaguanine synthase.